Here is a 593-residue protein sequence, read N- to C-terminus: NADH-quinone oxidoreductase subunit C/D (593 aa).

Residues 1–184 are NADH dehydrogenase I subunit C; the sequence is MTADNAIFIP…DPYSLTLAKQ (184 aa). The NADH dehydrogenase I subunit D stretch occupies residues 208-593; sequence DYMFLNLGPN…IDFVMADVDR (386 aa).

The protein in the N-terminal section; belongs to the complex I 30 kDa subunit family. In the C-terminal section; belongs to the complex I 49 kDa subunit family. In terms of assembly, NDH-1 is composed of 13 different subunits. Subunits NuoB, CD, E, F, and G constitute the peripheral sector of the complex.

It is found in the cell inner membrane. It carries out the reaction a quinone + NADH + 5 H(+)(in) = a quinol + NAD(+) + 4 H(+)(out). Functionally, NDH-1 shuttles electrons from NADH, via FMN and iron-sulfur (Fe-S) centers, to quinones in the respiratory chain. The immediate electron acceptor for the enzyme in this species is believed to be ubiquinone. Couples the redox reaction to proton translocation (for every two electrons transferred, four hydrogen ions are translocated across the cytoplasmic membrane), and thus conserves the redox energy in a proton gradient. This Pseudomonas putida (strain ATCC 47054 / DSM 6125 / CFBP 8728 / NCIMB 11950 / KT2440) protein is NADH-quinone oxidoreductase subunit C/D.